Reading from the N-terminus, the 191-residue chain is Ribosome maturation factor RimP (191 aa).

This sequence belongs to the RimP family.

Its subcellular location is the cytoplasm. Required for maturation of 30S ribosomal subunits. This Caulobacter vibrioides (strain NA1000 / CB15N) (Caulobacter crescentus) protein is Ribosome maturation factor RimP.